Consider the following 264-residue polypeptide: Acetylglutamate kinase (264 aa).

Substrate is bound by residues 50 to 51 (GG), R72, and N164.

It belongs to the acetylglutamate kinase family. ArgB subfamily.

It localises to the cytoplasm. It catalyses the reaction N-acetyl-L-glutamate + ATP = N-acetyl-L-glutamyl 5-phosphate + ADP. Its pathway is amino-acid biosynthesis; L-arginine biosynthesis; N(2)-acetyl-L-ornithine from L-glutamate: step 2/4. Its function is as follows. Catalyzes the ATP-dependent phosphorylation of N-acetyl-L-glutamate. The sequence is that of Acetylglutamate kinase from Moritella profunda.